The primary structure comprises 473 residues: GTPase Der (473 aa).

EngA-type G domains lie at 3-167 (FTVA…GEDR) and 203-378 (LRVA…KVWN). GTP-binding positions include 9–16 (GRPNVGKS), 56–60 (DTAGL), 119–122 (NKSE), 209–216 (GRPNAGKS), 256–260 (DTAGM), and 321–324 (NKWD). The KH-like domain occupies 379–463 (KRISTARLNR…PIRIHFRSPD (85 aa)).

It belongs to the TRAFAC class TrmE-Era-EngA-EngB-Septin-like GTPase superfamily. EngA (Der) GTPase family. As to quaternary structure, associates with the 50S ribosomal subunit.

In terms of biological role, GTPase that plays an essential role in the late steps of ribosome biogenesis. The chain is GTPase Der from Rhizobium johnstonii (strain DSM 114642 / LMG 32736 / 3841) (Rhizobium leguminosarum bv. viciae).